Here is a 378-residue protein sequence, read N- to C-terminus: Endopolygalacturonase I (378 aa).

Residues 1–20 (MHLNTTLLVSLALGAASVLA) form the signal peptide. Residues 21-39 (SPAPPAITAPPTAEEIAKR) constitute a propeptide that is removed on maturation. An intrachain disulfide couples Cys-43 to Cys-61. O-linked (Man...) threonine glycosylation is present at Thr-44. Ser-46, Ser-48, Ser-52, Ser-53, Ser-55, Ser-57, and Ser-62 each carry an O-linked (Man...) serine glycan. Residue Thr-63 is glycosylated (O-linked (Man...) threonine). O-linked (Man...) serine glycosylation is present at Ser-73. PbH1 repeat units lie at residues 174-204 (SDYLTLKDITIDNSDGDDNGGHNTDAFDIGT), 205-226 (STYVTISGATVYNQDDCVAVNS), 227-247 (GENIYFSGGYCSGGHGLSIGS), 256-277 (VKNVTFVDSTIINSDNGVRIKT), and 285-307 (VSDVTYKDITLTSIAKYGIVVQQ). Asp-219 acts as the Proton donor in catalysis. Cys-221 and Cys-237 are disulfide-bonded. Residue His-241 is part of the active site. An N-linked (GlcNAc...) asparagine glycan is attached at Asn-258. Intrachain disulfides connect Cys-345-Cys-350 and Cys-369-Cys-378.

This sequence belongs to the glycosyl hydrolase 28 family.

It is found in the secreted. The enzyme catalyses (1,4-alpha-D-galacturonosyl)n+m + H2O = (1,4-alpha-D-galacturonosyl)n + (1,4-alpha-D-galacturonosyl)m.. Its function is as follows. Involved in maceration and soft-rotting of plant tissue. Hydrolyzes the 1,4-alpha glycosidic bonds of de-esterified pectate in the smooth region of the plant cell wall. The sequence is that of Endopolygalacturonase I (pgaI) from Aspergillus aculeatus.